Consider the following 472-residue polypeptide: Uronate isomerase (472 aa).

Belongs to the metallo-dependent hydrolases superfamily. Uronate isomerase family.

The catalysed reaction is D-glucuronate = D-fructuronate. It catalyses the reaction aldehydo-D-galacturonate = keto-D-tagaturonate. The protein operates within carbohydrate metabolism; pentose and glucuronate interconversion. The polypeptide is Uronate isomerase (Xanthomonas axonopodis pv. citri (strain 306)).